The following is a 437-amino-acid chain: Indole diterpene prenyltransferase anaPT (437 aa).

Positions 1–28 are disordered; sequence MSPLSMQTDSVQGTAENKSLETNGTSND. Residues 102–103 and E111 each bind L-tryptophan; that span reads GF. Dimethylallyl diphosphate-binding residues include R124, K208, Y210, Y282, Q355, Y357, Y422, and Y426.

The protein belongs to the tryptophan dimethylallyltransferase family.

The catalysed reaction is (R)-benzodiazepinedione + dimethylallyl diphosphate = (2R,3S,11R)-aszonalenin + diphosphate. It catalyses the reaction (S)-benzodiazepinedione + dimethylallyl diphosphate = (2R,3S,11S)-aszonalenin + diphosphate. It participates in alkaloid biosynthesis. Its function is as follows. Indole diterpene prenyltransferase; part of the gene cluster that mediates the biosynthesis of the prenylated pyrroloindoline diketopiperazine acetylaszonalenin. The first step in the pathway is the formation of (R)-benzodiazepinedione by condensation of tryptophan and anthranilic acid catalyzed by the non-ribosomal peptide synthetase anaPS. The prenyltransferase anaPT then converts (R)-benzodiazepinedione to aszonalenin in the presence of dimethylallyl diphosphate (DMAPP) via C3-prenylation. The last step in the biosynthesis of acetylaszonalenin via acetylation of aszonalenin at position N1 catalyzed by anaAT. This chain is Indole diterpene prenyltransferase anaPT, found in Neosartorya fischeri (strain ATCC 1020 / DSM 3700 / CBS 544.65 / FGSC A1164 / JCM 1740 / NRRL 181 / WB 181) (Aspergillus fischerianus).